A 282-amino-acid chain; its full sequence is METISNPQELQNLCLMLRAEGKKIGLVPTMGYFHEGHLSLMDAARKQCDVLIVSLFVNPTQFGENEDLDAYPHNLERDSELAEKRGVDILFTPIRDDMYFEDHSTWVEVPDLATNLCGKSRPIHFRGVATVVTKLFMTAQPHVAVFGQKDWQQLAIIKRMVRDLNIPVDVQGHEIVREESGLALSSRNVYLTEDEKSVAPNIQKGLQKMRDWVTAGESDAAKLKSDLVEFYAETIPTGRVDYIEIVHPENINILKNVGDSALCAVAIQLGNARLIDNLLIKV.

30-37 (MGYFHEGH) lines the ATP pocket. Residue His-37 is the Proton donor of the active site. Gln-61 is a (R)-pantoate binding site. Gln-61 is a binding site for beta-alanine. ATP is bound at residue 147–150 (GQKD). Position 153 (Gln-153) interacts with (R)-pantoate. Residues Val-176 and 184–187 (LSSR) contribute to the ATP site.

It belongs to the pantothenate synthetase family. Homodimer.

Its subcellular location is the cytoplasm. It catalyses the reaction (R)-pantoate + beta-alanine + ATP = (R)-pantothenate + AMP + diphosphate + H(+). Its pathway is cofactor biosynthesis; (R)-pantothenate biosynthesis; (R)-pantothenate from (R)-pantoate and beta-alanine: step 1/1. In terms of biological role, catalyzes the condensation of pantoate with beta-alanine in an ATP-dependent reaction via a pantoyl-adenylate intermediate. The chain is Pantothenate synthetase from Maridesulfovibrio salexigens (strain ATCC 14822 / DSM 2638 / NCIMB 8403 / VKM B-1763) (Desulfovibrio salexigens).